A 92-amino-acid polypeptide reads, in one-letter code: Transcriptional regulator WhiB1 (92 aa).

A 4Fe-4S Wbl-type domain is found at 12 to 74; that stretch reads ACRDKDPELF…GGLSEDERRA (63 aa). Positions 13, 41, 44, and 50 each coordinate [4Fe-4S] cluster.

The protein belongs to the WhiB family. It depends on [4Fe-4S] cluster as a cofactor. Post-translationally, the Fe-S cluster can be nitrosylated by nitric oxide (NO). Upon Fe-S cluster removal intramolecular disulfide bonds are formed.

The protein localises to the cytoplasm. Acts as a transcriptional regulator. Probably redox-responsive. The apo- but not holo-form probably binds DNA. The chain is Transcriptional regulator WhiB1 (whiB1) from Bifidobacterium longum (strain NCC 2705).